Reading from the N-terminus, the 187-residue chain is UPF0301 protein VC_0467 (187 aa).

It belongs to the UPF0301 (AlgH) family.

In Vibrio cholerae serotype O1 (strain ATCC 39315 / El Tor Inaba N16961), this protein is UPF0301 protein VC_0467.